Reading from the N-terminus, the 54-residue chain is Glutathione S-transferase 6.7 (54 aa).

Belongs to the GST superfamily. Theta family. In terms of assembly, homodimer. Post-translationally, the N-terminus is blocked.

The protein localises to the cytoplasm. It carries out the reaction RX + glutathione = an S-substituted glutathione + a halide anion + H(+). Conjugation of reduced glutathione to a wide number of exogenous and endogenous hydrophobic electrophiles. In Dicentrarchus labrax (European seabass), this protein is Glutathione S-transferase 6.7.